Reading from the N-terminus, the 64-residue chain is uncharacterized protein (64 aa).

This is an uncharacterized protein from Bacillus subtilis (strain 168).